The sequence spans 53 residues: Rubredoxin (53 aa).

The 53-residue stretch at 1–53 (MQKFECTLCGYIYDPALVGPDTPDQDGAFEDVSENWVCPLCGAGKEDFEVYED) folds into the Rubredoxin-like domain. Fe cation contacts are provided by Cys6, Cys9, Cys38, and Cys41.

The protein belongs to the rubredoxin family. It depends on Fe(3+) as a cofactor.

Rubredoxin is a small nonheme, iron protein lacking acid-labile sulfide. Its single Fe, chelated to 4 Cys, functions as an electron acceptor and may also stabilize the conformation of the molecule. The polypeptide is Rubredoxin (Peptoniphilus asaccharolyticus (Peptostreptococcus asaccharolyticus)).